Here is a 234-residue protein sequence, read N- to C-terminus: Small ribosomal subunit protein uS3 (234 aa).

Residues Ile-39 to Lys-107 form the KH type-2 domain.

It belongs to the universal ribosomal protein uS3 family. Part of the 30S ribosomal subunit. Forms a tight complex with proteins S10 and S14.

Its function is as follows. Binds the lower part of the 30S subunit head. Binds mRNA in the 70S ribosome, positioning it for translation. The protein is Small ribosomal subunit protein uS3 of Helicobacter pylori (strain J99 / ATCC 700824) (Campylobacter pylori J99).